The chain runs to 270 residues: Transcription factor bHLH113 (270 aa).

Residues 109–153 (CTVDKSTKSSTKKRTGTGNGQESDQNRKPGKKGKRNQEKSSVGIA) form a disordered region. The bHLH domain maps to 144–193 (NQEKSSVGIAKVRKERLGERIAALQQLVSPYGKTDAASVLHEAMGYIKFL).

As to quaternary structure, homodimer.

The protein resides in the nucleus. In Arabidopsis thaliana (Mouse-ear cress), this protein is Transcription factor bHLH113 (BHLH113).